The following is a 222-amino-acid chain: Cyclin-U2-1 (222 aa).

This sequence belongs to the cyclin family. Cyclin U/P subfamily. Interacts with CDKA-1. Expressed in roots, stems and flowers. Expressed in the shoot apex, leaf primordia and young leaves.

In Arabidopsis thaliana (Mouse-ear cress), this protein is Cyclin-U2-1 (CYCU2-1).